A 281-amino-acid polypeptide reads, in one-letter code: Bifunctional protein FolD 1 (281 aa).

NADP(+) contacts are provided by residues 165–167, Ser190, and Ile231; that span reads GRS.

Belongs to the tetrahydrofolate dehydrogenase/cyclohydrolase family. Homodimer.

The enzyme catalyses (6R)-5,10-methylene-5,6,7,8-tetrahydrofolate + NADP(+) = (6R)-5,10-methenyltetrahydrofolate + NADPH. It carries out the reaction (6R)-5,10-methenyltetrahydrofolate + H2O = (6R)-10-formyltetrahydrofolate + H(+). Its pathway is one-carbon metabolism; tetrahydrofolate interconversion. In terms of biological role, catalyzes the oxidation of 5,10-methylenetetrahydrofolate to 5,10-methenyltetrahydrofolate and then the hydrolysis of 5,10-methenyltetrahydrofolate to 10-formyltetrahydrofolate. This chain is Bifunctional protein FolD 1, found in Desulfitobacterium hafniense (strain Y51).